A 179-amino-acid chain; its full sequence is Small ribosomal subunit protein uS7 (179 aa).

Belongs to the universal ribosomal protein uS7 family. Part of the 30S ribosomal subunit. Contacts proteins S9 and S11. Cross-links to IF3 and the P and E site tRNAs.

One of the primary rRNA binding proteins, it binds directly to 16S rRNA where it nucleates assembly of the head domain of the 30S subunit. Is located at the subunit interface close to the decoding center, where it has been shown to contact mRNA. Has been shown to contact tRNA in both the P and E sites; it probably blocks exit of the E site tRNA. Functionally, protein S7 is also a translational repressor protein; it regulates the expression of the str operon members to different degrees by binding to its mRNA. The sequence is that of Small ribosomal subunit protein uS7 (rpsG) from Escherichia coli (strain K12).